The primary structure comprises 229 residues: Small ribosomal subunit protein uS5 (229 aa).

Residues 61–124 (LEEQVLDVKL…AHAKLSLIKV (64 aa)) form the S5 DRBM domain.

This sequence belongs to the universal ribosomal protein uS5 family. In terms of assembly, part of the 30S ribosomal subunit. Contacts protein S4.

Its function is as follows. With S4 and S12 plays an important role in translational accuracy. The protein is Small ribosomal subunit protein uS5 of Methanococcus maripaludis (strain C6 / ATCC BAA-1332).